The primary structure comprises 311 residues: Urease accessory protein UreD (311 aa).

The protein belongs to the UreD family. In terms of assembly, ureD, UreF and UreG form a complex that acts as a GTP-hydrolysis-dependent molecular chaperone, activating the urease apoprotein by helping to assemble the nickel containing metallocenter of UreC. The UreE protein probably delivers the nickel.

It localises to the cytoplasm. Functionally, required for maturation of urease via the functional incorporation of the urease nickel metallocenter. The polypeptide is Urease accessory protein UreD (Parasynechococcus marenigrum (strain WH8102)).